The sequence spans 249 residues: Chitooligosaccharide deacetylase (249 aa).

Mg(2+) contacts are provided by histidine 61 and histidine 125.

It belongs to the YdjC deacetylase family. ChbG subfamily. Homodimer. Mg(2+) serves as cofactor.

The protein localises to the cytoplasm. It catalyses the reaction N,N'-diacetylchitobiose + H2O = N-acetyl-beta-D-glucosaminyl-(1-&gt;4)-D-glucosamine + acetate. It carries out the reaction diacetylchitobiose-6'-phosphate + H2O = N'-monoacetylchitobiose-6'-phosphate + acetate. It functions in the pathway glycan degradation; chitin degradation. Involved in the degradation of chitin. ChbG is essential for growth on the acetylated chitooligosaccharides chitobiose and chitotriose but is dispensable for growth on cellobiose and chitosan dimer, the deacetylated form of chitobiose. Deacetylation of chitobiose-6-P and chitotriose-6-P is necessary for both the activation of the chb promoter by the regulatory protein ChbR and the hydrolysis of phosphorylated beta-glucosides by the phospho-beta-glucosidase ChbF. Catalyzes the removal of only one acetyl group from chitobiose-6-P to yield monoacetylchitobiose-6-P, the inducer of ChbR and the substrate of ChbF. The polypeptide is Chitooligosaccharide deacetylase (Escherichia coli O9:H4 (strain HS)).